Here is a 249-residue protein sequence, read N- to C-terminus: MRPKIVAGNWKLHGSHAFAQALVAQVAAGLPLLGVSVIILPPLLYLSDLAQRFKGEGLAFGAQNVSHHDKGAYTGEVSAAMVADVGAHYTLVGHSERREYHHEDSELVARKFAAALSAGLRPILCVGESLPQREAGQAEVAIAMQLAPVLALVGPQGVARGLIAYEPVWAIGTGRHADPSQVQAMHAFIRGEIARQDARIGDSLLILYGGGIKPCNAAELFSQQDVDGGLIGGASLVADDFLAIARATV.

9-11 (NWK) is a binding site for substrate. The active-site Electrophile is His-94. Glu-166 (proton acceptor) is an active-site residue. Substrate is bound by residues Gly-172 and 232-233 (GG).

The protein belongs to the triosephosphate isomerase family. As to quaternary structure, homodimer.

The protein localises to the cytoplasm. It carries out the reaction D-glyceraldehyde 3-phosphate = dihydroxyacetone phosphate. Its pathway is carbohydrate biosynthesis; gluconeogenesis. It functions in the pathway carbohydrate degradation; glycolysis; D-glyceraldehyde 3-phosphate from glycerone phosphate: step 1/1. Involved in the gluconeogenesis. Catalyzes stereospecifically the conversion of dihydroxyacetone phosphate (DHAP) to D-glyceraldehyde-3-phosphate (G3P). The chain is Triosephosphate isomerase from Xylella fastidiosa (strain 9a5c).